The chain runs to 251 residues: MNLNSIPAFDDNYIWVLNDEAGRCLIVDPGDAEPVLNAITANNWQPEAIFLTHHHHDHVGGVKELVEKFPQIVVYGPQETQDKGTTQVVKDGETAFVLGHEFSVITTPGHTLGHICYFSKPYLFCGDTLFSGGCGRLFEGTALQMYQSLKKLSALPDDTLVCCAHEYTLSNMKFALSIFPHDLSINDYYRKVKELRAKNQITLPVILKNERQINVFLRTEDIDLINGINEETLLQQPEERFAWLRSKKDRF.

The Zn(2+) site is built by His53, His55, Asp57, His58, His110, Asp127, and His165.

The protein belongs to the metallo-beta-lactamase superfamily. Glyoxalase II family. Monomer. Zn(2+) serves as cofactor.

It carries out the reaction an S-(2-hydroxyacyl)glutathione + H2O = a 2-hydroxy carboxylate + glutathione + H(+). The protein operates within secondary metabolite metabolism; methylglyoxal degradation; (R)-lactate from methylglyoxal: step 2/2. Thiolesterase that catalyzes the hydrolysis of S-D-lactoyl-glutathione to form glutathione and D-lactic acid. This Shigella boydii serotype 4 (strain Sb227) protein is Hydroxyacylglutathione hydrolase.